The primary structure comprises 186 residues: MIEASKLKAGMTFETTDGKLIRVLEASHHKPGKGNTVMRMKLRDVRTGSTFDTTYRPEEKFEQAIIETRPAQYLYQMDDTAYFMDTENYEQYEIPIVNIENELKFILENSEVKIQFYGSEVIGVTIPTTVELVVTDTQPSIKGATVTGSGKPATLETGLVVNVPDFIEVGQKLVINTAEGTYVSRA.

Belongs to the elongation factor P family.

Its subcellular location is the cytoplasm. The protein operates within protein biosynthesis; polypeptide chain elongation. In terms of biological role, involved in peptide bond synthesis. Stimulates efficient translation and peptide-bond synthesis on native or reconstituted 70S ribosomes in vitro. Probably functions indirectly by altering the affinity of the ribosome for aminoacyl-tRNA, thus increasing their reactivity as acceptors for peptidyl transferase. The sequence is that of Elongation factor P from Streptococcus mutans serotype c (strain ATCC 700610 / UA159).